We begin with the raw amino-acid sequence, 116 residues long: Aspartate 1-decarboxylase (116 aa).

Ser-25 functions as the Schiff-base intermediate with substrate; via pyruvic acid in the catalytic mechanism. Ser-25 carries the pyruvic acid (Ser) modification. Substrate is bound at residue Thr-57. Residue Tyr-58 is the Proton donor of the active site. 73 to 75 (GAA) lines the substrate pocket.

Belongs to the PanD family. As to quaternary structure, heterooctamer of four alpha and four beta subunits. Pyruvate serves as cofactor. Is synthesized initially as an inactive proenzyme, which is activated by self-cleavage at a specific serine bond to produce a beta-subunit with a hydroxyl group at its C-terminus and an alpha-subunit with a pyruvoyl group at its N-terminus.

The protein localises to the cytoplasm. The enzyme catalyses L-aspartate + H(+) = beta-alanine + CO2. The protein operates within cofactor biosynthesis; (R)-pantothenate biosynthesis; beta-alanine from L-aspartate: step 1/1. Functionally, catalyzes the pyruvoyl-dependent decarboxylation of aspartate to produce beta-alanine. This is Aspartate 1-decarboxylase from Leptospira interrogans serogroup Icterohaemorrhagiae serovar Lai (strain 56601).